A 143-amino-acid polypeptide reads, in one-letter code: Putative glycerol transporter Lin0368 (143 aa).

4 helical membrane-spanning segments follow: residues 6-26 (GMIG…PLAE), 27-47 (NYGI…MWFM), 60-80 (AAFV…DVFM), and 90-110 (LPTI…AAAI). Positions 118–143 (HEAKQEKTEPGMNIKEEERLNENQLV) are disordered.

The protein localises to the membrane. Its function is as follows. Could be involved in the glycerol uptake either via facilitated diffusion or active transport. The sequence is that of Putative glycerol transporter Lin0368 from Listeria innocua serovar 6a (strain ATCC BAA-680 / CLIP 11262).